Reading from the N-terminus, the 653-residue chain is Asparagine--tRNA ligase, cytoplasmic (653 aa).

Belongs to the class-II aminoacyl-tRNA synthetase family.

The protein resides in the cytoplasm. It carries out the reaction tRNA(Asn) + L-asparagine + ATP = L-asparaginyl-tRNA(Asn) + AMP + diphosphate + H(+). This chain is Asparagine--tRNA ligase, cytoplasmic (asnS1), found in Dictyostelium discoideum (Social amoeba).